A 146-amino-acid polypeptide reads, in one-letter code: NADH-quinone oxidoreductase subunit A (146 aa).

The next 3 membrane-spanning stretches (helical) occupy residues 8–28, 63–83, and 93–113; these read FGSV…GYLT, FYVV…LYPW, and FALI…AYAW.

This sequence belongs to the complex I subunit 3 family. In terms of assembly, NDH-1 is composed of 14 different subunits. Subunits NuoA, H, J, K, L, M, N constitute the membrane sector of the complex.

It is found in the cell inner membrane. The enzyme catalyses a quinone + NADH + 5 H(+)(in) = a quinol + NAD(+) + 4 H(+)(out). Functionally, NDH-1 shuttles electrons from NADH, via FMN and iron-sulfur (Fe-S) centers, to quinones in the respiratory chain. The immediate electron acceptor for the enzyme in this species is believed to be a menaquinone. Couples the redox reaction to proton translocation (for every two electrons transferred, four hydrogen ions are translocated across the cytoplasmic membrane), and thus conserves the redox energy in a proton gradient. In Chlorobium chlorochromatii (strain CaD3), this protein is NADH-quinone oxidoreductase subunit A.